The primary structure comprises 298 residues: Dioxygenase aneA (298 aa).

The Fe cation site is built by His134, Asp136, and His213.

The protein belongs to the PhyH family. As to quaternary structure, homodimer. It depends on Fe cation as a cofactor.

It catalyses the reaction aculene D + 2-oxoglutarate + O2 = aculene C + succinate + CO2 + H2O. It carries out the reaction aculene B + 2-oxoglutarate + O2 = aculene A + succinate + CO2 + H2O. It participates in secondary metabolite biosynthesis. Its function is as follows. Dioxygenase; part of the gene cluster that mediates the biosynthesis of aculenes, a unique type of norsesquiterpenes that contain a nordaucane skeleton linked to an L-proline moiety and are of mixed biosynthetic origin. The pathway begins with the synthesis of dauca-4,7-diene by the terpene cyclase aneC using farnesyl pyrophosphate (FPP) as substrate. The cytochrome P450 monooxygenase aneF then performs the initial oxidation at C-12 of dauca-4,7-diene to yield asperaculane D. Asperaculane D is substrate of the cytochrome P450 monooxygenase aneD for C-10 hydroxylation to yield asperaculane E. The cytochrome P450 monooxygenase aneG then converts asperaculane E into aculene D via C-2 oxidation. The monomodular nonribosomal peptide synthase aneB adenylates L-proline and the thiohydrolase aneE transfers this activated L-proline derivative to aculenes D and C to produce respectively aculenes B and A. The dioxygenase aneA converts aculene D into aculene C, and aculene B into aculene A by introducing the 5,6-alkene moiety. Asperculanes A, B, C and F, as well as 14-prolyl asperculane C, might be shunt products of the pathway. The protein is Dioxygenase aneA of Aspergillus aculeatus (strain ATCC 16872 / CBS 172.66 / WB 5094).